The primary structure comprises 486 residues: Mitogen-activated protein kinase 17 (486 aa).

Residues 16–307 (YQIQEVVGKG…AEEALADPYF (292 aa)) enclose the Protein kinase domain. ATP is bound by residues 22-30 (VGKGSYGVV) and Lys45. Catalysis depends on Asp142, which acts as the Proton acceptor. Thr178 is subject to Phosphothreonine. The short motif at 178–180 (TDY) is the TXY element. Tyr180 carries the post-translational modification Phosphotyrosine. Phosphothreonine is present on Thr183. The segment at 386-455 (EEHNDDEEEH…LSSQKASQVD (70 aa)) is disordered. A compositionally biased stretch (low complexity) spans 422-433 (SVHAQSSSASVV). A compositionally biased stretch (polar residues) spans 440 to 452 (PNTATGLSSQKAS).

This sequence belongs to the protein kinase superfamily. CMGC Ser/Thr protein kinase family. MAP kinase subfamily. Dually phosphorylated on Thr-178 and Tyr-180, which activates the enzyme.

It carries out the reaction L-seryl-[protein] + ATP = O-phospho-L-seryl-[protein] + ADP + H(+). The enzyme catalyses L-threonyl-[protein] + ATP = O-phospho-L-threonyl-[protein] + ADP + H(+). With respect to regulation, activated by threonine and tyrosine phosphorylation. In Arabidopsis thaliana (Mouse-ear cress), this protein is Mitogen-activated protein kinase 17 (MPK17).